A 446-amino-acid polypeptide reads, in one-letter code: Argininosuccinate lyase (446 aa).

This sequence belongs to the lyase 1 family. Argininosuccinate lyase subfamily.

The protein localises to the cytoplasm. It catalyses the reaction 2-(N(omega)-L-arginino)succinate = fumarate + L-arginine. Its pathway is amino-acid biosynthesis; L-arginine biosynthesis; L-arginine from L-ornithine and carbamoyl phosphate: step 3/3. The sequence is that of Argininosuccinate lyase from Phocaeicola vulgatus (strain ATCC 8482 / DSM 1447 / JCM 5826 / CCUG 4940 / NBRC 14291 / NCTC 11154) (Bacteroides vulgatus).